The following is a 417-amino-acid chain: NADH-quinone oxidoreductase subunit D (417 aa).

It belongs to the complex I 49 kDa subunit family. As to quaternary structure, NDH-1 is composed of 14 different subunits. Subunits NuoB, C, D, E, F, and G constitute the peripheral sector of the complex.

The protein localises to the cell inner membrane. The enzyme catalyses a quinone + NADH + 5 H(+)(in) = a quinol + NAD(+) + 4 H(+)(out). Its function is as follows. NDH-1 shuttles electrons from NADH, via FMN and iron-sulfur (Fe-S) centers, to quinones in the respiratory chain. The immediate electron acceptor for the enzyme in this species is believed to be ubiquinone. Couples the redox reaction to proton translocation (for every two electrons transferred, four hydrogen ions are translocated across the cytoplasmic membrane), and thus conserves the redox energy in a proton gradient. This is NADH-quinone oxidoreductase subunit D from Ralstonia pickettii (strain 12J).